A 363-amino-acid chain; its full sequence is MSLQSIKYKRGSLEILDQLLLPVVSKYLPVRGVEDGWKVINKMQVRGAPAIAIVGCLSLAVEIYPEEFETKKSLRQEIEGKLNYLVSARPTAVNMKISADELITLANELSKNDDVTVANMKQRFLDATEAMLEKDIADNRAIGSNGAKAILERVAEATGSPGSASPVRVLTHCNTGSLATAGYGTALGVVRHLSELGKLEHVYCTETRPYNQGARLTAYELVHEKLPATLVLDSMVAALFRVKNVAAVVVGADRVAANGDTANKIGTYQIAVVAKHHGVPFYVAAPLTSIDLQIPSGEHIIIEVRPDREMTHVGEHRIAAPGINCWNPAFDVTPASLITGIITEHGVFKPSTLKDEIAKLIEL.

Residue Asp253 is the Proton donor of the active site.

Belongs to the eIF-2B alpha/beta/delta subunits family. MtnA subfamily.

It localises to the cytoplasm. The protein localises to the nucleus. The catalysed reaction is 5-(methylsulfanyl)-alpha-D-ribose 1-phosphate = 5-(methylsulfanyl)-D-ribulose 1-phosphate. It participates in amino-acid biosynthesis; L-methionine biosynthesis via salvage pathway; L-methionine from S-methyl-5-thio-alpha-D-ribose 1-phosphate: step 1/6. Functionally, catalyzes the interconversion of methylthioribose-1-phosphate (MTR-1-P) into methylthioribulose-1-phosphate (MTRu-1-P). The polypeptide is Methylthioribose-1-phosphate isomerase (Drosophila grimshawi (Hawaiian fruit fly)).